The chain runs to 373 residues: Dimethylallyltryptophan synthase CymD (373 aa).

Positions 55, 56, and 64 each coordinate L-tryptophan. E64 serves as the catalytic Nucleophile. Dimethylallyl diphosphate-binding residues include Q77, K146, W148, R205, and K207. R211 is a binding site for L-tryptophan. Y274 lines the dimethylallyl diphosphate pocket. Y326 lines the L-tryptophan pocket. Positions 337, 339, and 341 each coordinate dimethylallyl diphosphate. One can recognise a FtsK domain in the interval 346–373 (MHDVTPPPLGVSQQHHLSGQTTARGRTE).

Its function is as follows. Dimethylallyltryptophan synthase; part of the gene cluster that mediates the biosynthesis of cyclic heptapeptides, known as cyclomarins and also of cyclic dipeptides, called cyclomarazines, which have both antimicrobial and cytotoxic effects. Catalyzes the reverse N-prenylation of monomeric L-tryptophan with dimethylallyl diphosphate (DMAPP) to form N-(1,1-dimethylallyl)-tryptophan (r-N-DMAT). The formation of r-N-DMAT appears to proceed via the deprotonation of the indole nitrogen of tryptophan, which facilitates a nucleophilic attack on the carbocation that is forming on the dimethylallyl group as the diphosphate dissociates. The N-(1,1-dimethylallyl)-tryptophan produced by CymD is combined with a range of standard and nonproteinogenic amino acid substrates to synthesize the peptides, a process that is probably catalyzed by the non-canonical nonribosomal peptide synthetase (NRPS), CymA. Other proteins in the cluster catalyze further modifications of the peptides including CymV which catalyzes the oxidation of olefinic cyclomarins and cyclomarazines to their respective epoxide derivatives. Utilizes only DMAPP as the prenyl donor and has no requirement for divalent cations. The sequence is that of Dimethylallyltryptophan synthase CymD from Salinispora arenicola (strain CNS-205).